Here is a 379-residue protein sequence, read N- to C-terminus: uncharacterized protein (379 aa).

Residues 7 to 27 form a helical membrane-spanning segment; the sequence is VYIFAGIFLFIALIILIKIFF.

The protein localises to the membrane. This is an uncharacterized protein from Caenorhabditis elegans.